The primary structure comprises 210 residues: Interleukin-6 (210 aa).

Positions 1 to 25 are cleaved as a signal peptide; the sequence is MNSLSTSAFSPVAFSLGLLLVMATA. Cys-72 and Cys-78 are joined by a disulfide. Residue Ser-81 is modified to Phosphoserine. A disulfide bond links Cys-101 and Cys-111.

It belongs to the IL-6 superfamily. Component of a hexamer of two molecules each of IL6, IL6R and IL6ST; first binds to IL6R to associate with the signaling subunit IL6ST. Interacts with IL6R (via the N-terminal ectodomain); this interaction may be affected by IL6R-binding with SORL1, hence decreasing IL6 cis signaling. Interacts with SORL1 (via the N-terminal ectodomain); this interaction leads to IL6 internalization and lysosomal degradation. May form a trimeric complex with the soluble SORL1 ectodomain and soluble IL6R receptor; this interaction might stabilize circulating IL6, hence promoting IL6 trans signaling.

It localises to the secreted. In terms of biological role, cytokine with a wide variety of biological functions in immunity, tissue regeneration, and metabolism. Binds to IL6R, then the complex associates to the signaling subunit IL6ST/gp130 to trigger the intracellular IL6-signaling pathway. The interaction with the membrane-bound IL6R and IL6ST stimulates 'classic signaling', whereas the binding of IL6 and soluble IL6R to IL6ST stimulates 'trans-signaling'. Alternatively, 'cluster signaling' occurs when membrane-bound IL6:IL6R complexes on transmitter cells activate IL6ST receptors on neighboring receiver cells. Its function is as follows. IL6 is a potent inducer of the acute phase response. Rapid production of IL6 contributes to host defense during infection and tissue injury, but excessive IL6 synthesis is involved in disease pathology. In the innate immune response, is synthesized by myeloid cells, such as macrophages and dendritic cells, upon recognition of pathogens through toll-like receptors (TLRs) at the site of infection or tissue injury. In the adaptive immune response, is required for the differentiation of B cells into immunoglobulin-secreting cells. Plays a major role in the differentiation of CD4(+) T cell subsets. Essential factor for the development of T follicular helper (Tfh) cells that are required for the induction of germinal-center formation. Required to drive naive CD4(+) T cells to the Th17 lineage. Also required for proliferation of myeloma cells and the survival of plasmablast cells. Functionally, acts as an essential factor in bone homeostasis and on vessels directly or indirectly by induction of VEGF, resulting in increased angiogenesis activity and vascular permeability. Induces, through 'trans-signaling' and synergistically with IL1B and TNF, the production of VEGF. Involved in metabolic controls, is discharged into the bloodstream after muscle contraction increasing lipolysis and improving insulin resistance. 'Trans-signaling' in central nervous system also regulates energy and glucose homeostasis. Mediates, through GLP-1, crosstalk between insulin-sensitive tissues, intestinal L cells and pancreatic islets to adapt to changes in insulin demand. Also acts as a myokine. Plays a protective role during liver injury, being required for maintenance of tissue regeneration. Also has a pivotal role in iron metabolism by regulating HAMP/hepcidin expression upon inflammation or bacterial infection. Through activation of IL6ST-YAP-NOTCH pathway, induces inflammation-induced epithelial regeneration. This Mustela putorius furo (European domestic ferret) protein is Interleukin-6 (IL6).